The following is a 144-amino-acid chain: MGFTEKQEALVNSSSQLFKQNPSNYSVLFYTIILQKAPTAKAMFSFLKDSAGVVDSPKLGAHAEKVFGMVRDSAVQLRATGEVVLDGKDGSIHIQKGVLDPHFVVVKEALLKTIKEASGDKWSEELSAAWEVAYDGLATAIKAA.

The region spanning 2 to 144 is the Globin domain; sequence GFTEKQEALV…DGLATAIKAA (143 aa). A nitrated tyrosine mark is found at Y25 and Y30. A heme b-binding site is contributed by S45. Phosphoserine is present on S45. H62 contributes to the O2 binding site. Residues K65, H93, and K96 each coordinate heme b. Y134 carries the post-translational modification Nitrated tyrosine.

It belongs to the plant globin family. In terms of assembly, monomer. Post-translationally, nitrated in effective nodules and particularly in hypoxic conditions; this mechanism may play a protective role in the symbiosis by buffering toxic peroxynitrite NO(2)(-). Nitration level decrease during nodule senescence. Phosphorylation at Ser-45 disrupts the molecular environment of its porphyrin ring oxygen binding pocket, thus leading to a reduced oxygen consumption and to the delivery of oxygen O(2) to symbiosomes. As to expression, root nodules.

The protein localises to the cytoplasm. The protein resides in the cytosol. Its subcellular location is the nucleus. In terms of biological role, leghemoglobin that reversibly binds oxygen O(2) through a pentacoordinated heme iron. In root nodules, facilitates the diffusion of oxygen to the bacteroids while preventing the bacterial nitrogenase from being inactivated by buffering dioxygen, nitric oxide and carbon monoxide, and promoting the formation of reactive oxygen species (ROS, e.g. H(2)O(2)). This role is essential for symbiotic nitrogen fixation (SNF). The polypeptide is Leghemoglobin-1 (Vicia faba (Broad bean)).